The primary structure comprises 768 residues: Degenerin mec-4 (768 aa).

Topologically, residues 1-109 (MSWMQNLKNY…GEAPNVYYRA (109 aa)) are cytoplasmic. The chain crosses the membrane as a helical span at residues 110–130 (VWVMLFLGCMIMLYLNAQSVL). The Extracellular portion of the chain corresponds to 131–718 (DKYNRNEKIV…VNLLADFGGQ (588 aa)). Disordered stretches follow at residues 187–221 (AGGN…GKRD) and 237–260 (GSQG…ETTT). Basic and acidic residues predominate over residues 189 to 200 (GNKEHDGEKEVI). Positions 203–212 (APTTPAPTTK) are enriched in low complexity. The segment covering 243-252 (EQEDKDDEKE) has biased composition (acidic residues). N-linked (GlcNAc...) asparagine glycosylation is found at N336, N357, N480, N484, N503, and N671. A helical membrane pass occupies residues 719–739 (LGLWCGISFLTCCEFVFLFLE). The Cytoplasmic portion of the chain corresponds to 740–768 (TAYMSAEHNYSLYKKKKAEKAKKVASGSF).

This sequence belongs to the amiloride-sensitive sodium channel (TC 1.A.6) family. As to quaternary structure, the channel is probably composed of at least the mec-2, mec-4, mec-6 and mec-10 subunits.

It localises to the membrane. Its function is as follows. Probable sodium channel subunit. May be needed for mechanosensory transduction (touch sensitivity). Negatively regulates the turning step of male mating behavior. This Caenorhabditis briggsae protein is Degenerin mec-4 (mec-4).